Here is a 264-residue protein sequence, read N- to C-terminus: Cell cycle regulator CcrZ (264 aa).

ATP is bound by residues Phe32, Trp70, and Gly73. The Brenner's motif [HXDhX3N] motif lies at 157 to 164; that stretch reads HGDVRHSN. Asp159 (proton acceptor) is an active-site residue. Positions 173-196 match the APH motif; sequence IYLVDWDSVRLTDRMFDVAHMLCH.

Belongs to the aminoglycoside phosphotransferase family. Monomer in solution. Interacts with DnaA (via domains I (1-82) and III (111-326)). Interacts with DnaB. Interacts with FtsZ; the interaction is direct and ensures correct localization during the cell cycle.

It is found in the cytoplasm. It catalyses the reaction D-ribose + ATP = D-ribose 5-phosphate + ADP + H(+). The catalysed reaction is 2-deoxy-D-ribose + ATP = 2-deoxy-D-ribose 5-phosphate + ADP + H(+). Its function is as follows. Plays a role in cell cycle regulation and chromosome integrity. Activates DnaA-dependent chromosomal DNA replication initiation ensuring that the chromosome is replicated at the right time during the cell cycle. May regulate replication initiation through phosphorylation of a possible second messenger or metabolite, and by interacting with replication initiation proteins. Has ATPase activity with D-ribose and 2-deoxy-D-ribose in vitro, but not with choline. Involved in DNA damage response. This chain is Cell cycle regulator CcrZ, found in Streptococcus pneumoniae serotype 2 (strain D39 / NCTC 7466).